A 333-amino-acid polypeptide reads, in one-letter code: DNA repair and recombination protein RadA (333 aa).

Residue 127-134 coordinates ATP; sequence GEFGSGKT.

It belongs to the eukaryotic RecA-like protein family.

Its function is as follows. Involved in DNA repair and in homologous recombination. Binds and assemble on single-stranded DNA to form a nucleoprotein filament. Hydrolyzes ATP in a ssDNA-dependent manner and promotes DNA strand exchange between homologous DNA molecules. In Pyrobaculum aerophilum (strain ATCC 51768 / DSM 7523 / JCM 9630 / CIP 104966 / NBRC 100827 / IM2), this protein is DNA repair and recombination protein RadA.